The sequence spans 247 residues: E3 ubiquitin ligase TRIM40 (247 aa).

The segment at 12-55 adopts an RING-type zinc-finger fold; the sequence is CPICLDPLKEAVSTDCRHLFCRMCLIRHMDKASVSGVLSCPVCR. The segment at 64 to 105 adopts a B box-type zinc-finger fold; that stretch reads GDNYICHTHQKRVCRFCESSRHLLCEECLQSPEHRAHTELSI. 4 residues coordinate Zn(2+): Cys69, His72, Cys91, and His97. A coiled-coil region spans residues 111–148; that stretch reads HYKERLNRRSRKLRKDLGDLQRLKAQEEKMLQALQVDW.

This sequence belongs to the TRIM/RBCC family. In terms of assembly, interacts with NEDD8.

The catalysed reaction is S-ubiquitinyl-[E2 ubiquitin-conjugating enzyme]-L-cysteine + [acceptor protein]-L-lysine = [E2 ubiquitin-conjugating enzyme]-L-cysteine + N(6)-ubiquitinyl-[acceptor protein]-L-lysine.. In terms of biological role, E3 ubiquitin-protein ligase that plays a role in the limitation of the innate immune response. Mediates inhibition of the RLR signaling pathway by ubiquitinating RIGI and IFIH1 receptors, leading to their proteasomal degradation. Also promotes the neddylation of IKBKG/NEMO, stabilizing NFKBIA, and thereby inhibiting of NF-kappa-B nuclear translocation and activation. In Rattus norvegicus (Rat), this protein is E3 ubiquitin ligase TRIM40 (Trim40).